The chain runs to 522 residues: MKNLKINNRFTAELPADPDLTNETRQVKNTAFSYVNPTKPSNPKLIHASEETAALVGISKEEIHSEEFLNVFSGKEILPETQPYAMCYAGHQFGNWAGQLGDGRAINLTEVENNNTFYTLQLKGAGKTPYSRTADGLAVLRSSIREYLCAEAMYHLGVPTTRSLSLILSGDQVLRDILYNGNPAYEKGAVVCRVAPSFIRFGSFEMLAARNELKNLKQFVEYTIKHYFPEITGEPKEQYLQFFKKVADTTREMILHWQRVGFVHGVMNTDNMSVHGITIDYGPYGWLENYDPNWTPNTTDSQNKRYRFGNQPQVAHWNLYQLANAIYPLINETEGLEKILESFMDDFILDYKEMFLNKLGLFTSTETDNDLIDNLEAVLQLTETDMTIFFRNLSSVKKTDSVEKAIEKIQFAFYKIEEVSGEILDAWKKWFSVYLDRLNAEVLSDEVRLQKMNLINPKYVLRNYMAQLAIDAADKEDYSLVNELYTLLQKPYDEQPEYQKWFAKRPDWATSKVGCSMLSCSS.

Residues G101, G103, R104, K123, D135, G136, R193, and R200 each coordinate ATP. The active-site Proton acceptor is the D270. N271 and D280 together coordinate Mg(2+). D280 serves as a coordination point for ATP.

This sequence belongs to the SELO family. Mg(2+) is required as a cofactor. Mn(2+) serves as cofactor.

The enzyme catalyses L-seryl-[protein] + ATP = 3-O-(5'-adenylyl)-L-seryl-[protein] + diphosphate. It catalyses the reaction L-threonyl-[protein] + ATP = 3-O-(5'-adenylyl)-L-threonyl-[protein] + diphosphate. The catalysed reaction is L-tyrosyl-[protein] + ATP = O-(5'-adenylyl)-L-tyrosyl-[protein] + diphosphate. It carries out the reaction L-histidyl-[protein] + UTP = N(tele)-(5'-uridylyl)-L-histidyl-[protein] + diphosphate. The enzyme catalyses L-seryl-[protein] + UTP = O-(5'-uridylyl)-L-seryl-[protein] + diphosphate. It catalyses the reaction L-tyrosyl-[protein] + UTP = O-(5'-uridylyl)-L-tyrosyl-[protein] + diphosphate. Its function is as follows. Nucleotidyltransferase involved in the post-translational modification of proteins. It can catalyze the addition of adenosine monophosphate (AMP) or uridine monophosphate (UMP) to a protein, resulting in modifications known as AMPylation and UMPylation. This Flavobacterium johnsoniae (strain ATCC 17061 / DSM 2064 / JCM 8514 / BCRC 14874 / CCUG 350202 / NBRC 14942 / NCIMB 11054 / UW101) (Cytophaga johnsonae) protein is Protein nucleotidyltransferase YdiU.